The following is a 471-amino-acid chain: 3-isopropylmalate dehydratase large subunit (471 aa).

Cys-349, Cys-410, and Cys-413 together coordinate [4Fe-4S] cluster.

This sequence belongs to the aconitase/IPM isomerase family. LeuC type 1 subfamily. Heterodimer of LeuC and LeuD. [4Fe-4S] cluster serves as cofactor.

The catalysed reaction is (2R,3S)-3-isopropylmalate = (2S)-2-isopropylmalate. Its pathway is amino-acid biosynthesis; L-leucine biosynthesis; L-leucine from 3-methyl-2-oxobutanoate: step 2/4. Catalyzes the isomerization between 2-isopropylmalate and 3-isopropylmalate, via the formation of 2-isopropylmaleate. This Chromobacterium violaceum (strain ATCC 12472 / DSM 30191 / JCM 1249 / CCUG 213 / NBRC 12614 / NCIMB 9131 / NCTC 9757 / MK) protein is 3-isopropylmalate dehydratase large subunit.